Here is a 377-residue protein sequence, read N- to C-terminus: Nitric oxide reductase FlRd-NAD(+) reductase (377 aa).

This sequence belongs to the FAD-dependent oxidoreductase family. Requires FAD as cofactor.

Its subcellular location is the cytoplasm. It carries out the reaction 2 reduced [nitric oxide reductase rubredoxin domain] + NAD(+) + H(+) = 2 oxidized [nitric oxide reductase rubredoxin domain] + NADH. It functions in the pathway nitrogen metabolism; nitric oxide reduction. One of at least two accessory proteins for anaerobic nitric oxide (NO) reductase. Reduces the rubredoxin moiety of NO reductase. In Escherichia coli O6:K15:H31 (strain 536 / UPEC), this protein is Nitric oxide reductase FlRd-NAD(+) reductase.